We begin with the raw amino-acid sequence, 168 residues long: S-ribosylhomocysteine lyase (168 aa).

His54, His58, and Cys128 together coordinate Fe cation.

This sequence belongs to the LuxS family. In terms of assembly, homodimer. Fe cation serves as cofactor.

It carries out the reaction S-(5-deoxy-D-ribos-5-yl)-L-homocysteine = (S)-4,5-dihydroxypentane-2,3-dione + L-homocysteine. Its function is as follows. Involved in the synthesis of autoinducer 2 (AI-2) which is secreted by bacteria and is used to communicate both the cell density and the metabolic potential of the environment. The regulation of gene expression in response to changes in cell density is called quorum sensing. Catalyzes the transformation of S-ribosylhomocysteine (RHC) to homocysteine (HC) and 4,5-dihydroxy-2,3-pentadione (DPD). This chain is S-ribosylhomocysteine lyase, found in Neisseria meningitidis serogroup C / serotype 2a (strain ATCC 700532 / DSM 15464 / FAM18).